Reading from the N-terminus, the 185-residue chain is Ribosome-recycling factor (185 aa).

This sequence belongs to the RRF family.

It is found in the cytoplasm. In terms of biological role, responsible for the release of ribosomes from messenger RNA at the termination of protein biosynthesis. May increase the efficiency of translation by recycling ribosomes from one round of translation to another. The protein is Ribosome-recycling factor of Pseudothermotoga lettingae (strain ATCC BAA-301 / DSM 14385 / NBRC 107922 / TMO) (Thermotoga lettingae).